The sequence spans 263 residues: uncharacterized protein (263 aa).

Position 17–41 (17–41) interacts with NAD(+); that stretch reads GGGRGLGAAIALAFAQAGADVLIAS. Ser147 contacts substrate. Tyr160 serves as the catalytic Proton acceptor. Lys164 is an NAD(+) binding site.

This sequence belongs to the short-chain dehydrogenases/reductases (SDR) family.

This is an uncharacterized protein from Mycobacterium tuberculosis (strain CDC 1551 / Oshkosh).